The chain runs to 487 residues: Beta-barrel assembly-enhancing protease (487 aa).

The N-terminal stretch at 1–27 is a signal peptide; it reads MFRQLKKNLVATLIAALALGQVAPAFA. A Zn(2+)-binding site is contributed by His-136. Glu-137 is a catalytic residue. Residues His-140 and Glu-201 each coordinate Zn(2+). Asp-205 functions as the Proton donor in the catalytic mechanism. 2 TPR repeats span residues 309–342 and 427–460; these read HAAQYGRALQAMEASKYDEARKTLQPLLSAEPNN and DQELAARAESYALAGRLDQAISLLSSASAQAKLG.

This sequence belongs to the peptidase M48 family. BepA subfamily. Zn(2+) serves as cofactor.

The protein resides in the periplasm. Functions both as a chaperone and a metalloprotease. Maintains the integrity of the outer membrane by promoting either the assembly or the elimination of outer membrane proteins, depending on their folding state. The chain is Beta-barrel assembly-enhancing protease from Salmonella typhi.